A 330-amino-acid polypeptide reads, in one-letter code: ADP-L-glycero-D-manno-heptose-6-epimerase (330 aa).

NADP(+)-binding positions include 11 to 12 (FI), 32 to 33 (DD), Q39, Q54, 75 to 79 (QGACA), and N92. Catalysis depends on Y139, which acts as the Proton acceptor. NADP(+) is bound at residue K143. N168 contacts substrate. 2 residues coordinate NADP(+): V169 and K177. The Proton acceptor role is filled by K177. Substrate-binding positions include R179, H186, 200-203 (FGEH), R213, and Y292.

The protein belongs to the NAD(P)-dependent epimerase/dehydratase family. HldD subfamily. In terms of assembly, homopentamer. The cofactor is NADP(+).

It catalyses the reaction ADP-D-glycero-beta-D-manno-heptose = ADP-L-glycero-beta-D-manno-heptose. The protein operates within nucleotide-sugar biosynthesis; ADP-L-glycero-beta-D-manno-heptose biosynthesis; ADP-L-glycero-beta-D-manno-heptose from D-glycero-beta-D-manno-heptose 7-phosphate: step 4/4. Its function is as follows. Catalyzes the interconversion between ADP-D-glycero-beta-D-manno-heptose and ADP-L-glycero-beta-D-manno-heptose via an epimerization at carbon 6 of the heptose. The polypeptide is ADP-L-glycero-D-manno-heptose-6-epimerase (Pseudomonas aeruginosa (strain UCBPP-PA14)).